Consider the following 185-residue polypeptide: GTP cyclohydrolase 1 (185 aa).

Residues cysteine 75, histidine 78, and cysteine 146 each contribute to the Zn(2+) site.

Belongs to the GTP cyclohydrolase I family. Toroid-shaped homodecamer, composed of two pentamers of five dimers.

The enzyme catalyses GTP + H2O = 7,8-dihydroneopterin 3'-triphosphate + formate + H(+). The protein operates within cofactor biosynthesis; 7,8-dihydroneopterin triphosphate biosynthesis; 7,8-dihydroneopterin triphosphate from GTP: step 1/1. This chain is GTP cyclohydrolase 1, found in Methylococcus capsulatus (strain ATCC 33009 / NCIMB 11132 / Bath).